The chain runs to 563 residues: uncharacterized protein (563 aa).

The protein belongs to the HyuB family.

This is an uncharacterized protein from Methanocaldococcus jannaschii (strain ATCC 43067 / DSM 2661 / JAL-1 / JCM 10045 / NBRC 100440) (Methanococcus jannaschii).